The primary structure comprises 129 residues: Small ribosomal subunit protein uS11 (129 aa).

Belongs to the universal ribosomal protein uS11 family. As to quaternary structure, part of the 30S ribosomal subunit. Interacts with proteins S7 and S18. Binds to IF-3.

In terms of biological role, located on the platform of the 30S subunit, it bridges several disparate RNA helices of the 16S rRNA. Forms part of the Shine-Dalgarno cleft in the 70S ribosome. This Hamiltonella defensa subsp. Acyrthosiphon pisum (strain 5AT) protein is Small ribosomal subunit protein uS11.